Here is a 122-residue protein sequence, read N- to C-terminus: Large ribosomal subunit protein bL12 (122 aa).

The protein belongs to the bacterial ribosomal protein bL12 family. Homodimer. Part of the ribosomal stalk of the 50S ribosomal subunit. Forms a multimeric L10(L12)X complex, where L10 forms an elongated spine to which 2 to 4 L12 dimers bind in a sequential fashion. Binds GTP-bound translation factors.

Its function is as follows. Forms part of the ribosomal stalk which helps the ribosome interact with GTP-bound translation factors. Is thus essential for accurate translation. This Stenotrophomonas maltophilia (strain K279a) protein is Large ribosomal subunit protein bL12.